Reading from the N-terminus, the 557-residue chain is Prosaposin (557 aa).

Positions 1–16 are cleaved as a signal peptide; that stretch reads MYALALFASLLATALT. A propeptide spanning residues 17-59 is cleaved from the precursor; the sequence is SPVQDPKTCSGGSAVLCRDVKTAVDCGAVKHCQQMVWSKPTAK. In terms of domain architecture, Saposin A-type 1 spans 18-58; it reads PVQDPKTCSGGSAVLCRDVKTAVDCGAVKHCQQMVWSKPTA. Saposin B-type domains follow at residues 59–142, 193–277, 313–394, and 438–519; these read KSLP…QSLQ, NEDV…NEVK, NVIL…AARP, and NGGF…PSAY. Cystine bridges form between C63/C138, C66/C132, and C94/C106. A glycan (N-linked (GlcNAc...) asparagine) is linked at N80. The propeptide occupies 143–193; that stretch reads EYLAEQNQKQLESNKIPEVDMARVVAPFMSNIPLLLYPQDHPRSQPQPKAN. Cystine bridges form between C197–C273, C200–C267, and C229–C240. N214 carries an N-linked (GlcNAc...) asparagine glycan. Residues 277–312 constitute a propeptide that is removed on maturation; it reads KRVPMKTLVPATETIKNILPALEMMDPYEQNLVQAH. 3 disulfide bridges follow: C317–C390, C320–C384, and C348–C359. N-linked (GlcNAc...) asparagine glycosylation occurs at N334. A propeptide spanning residues 393 to 437 is cleaved from the precursor; sequence RPELVEALEQPAPAIVSALLKEPTPPKQPAQPKQSALPAHVPPQK. 3 disulfide bridges follow: C442–C515, C445–C509, and C473–C484. N-linked (GlcNAc...) asparagine glycosylation occurs at N459. Residues 520–557 constitute a propeptide that is removed on maturation; the sequence is KLLLGTEKCVWGPSYWCQNMETAARCNAVDHCKRHVWN. The region spanning 521–557 is the Saposin A-type 2 domain; the sequence is LLLGTEKCVWGPSYWCQNMETAARCNAVDHCKRHVWN.

In terms of assembly, saposin-B is a homodimer. Prosaposin exists as a roughly half-half mixture of monomers and disulfide-linked dimers. Monomeric prosaposin interacts (via C-terminus) with sortilin/SORT1, the interaction is required for targeting to lysosomes. Interacts with GRN; facilitates lysosomal delivery of progranulin from the extracellular space and the biosynthetic pathway.

The protein resides in the secreted. The protein localises to the lysosome. Functionally, behaves as a myelinotrophic and neurotrophic factor, these effects are mediated by its G-protein-coupled receptors, GPR37 and GPR37L1, undergoing ligand-mediated internalization followed by ERK phosphorylation signaling. In terms of biological role, saposin-A and saposin-C stimulate the hydrolysis of glucosylceramide by beta-glucosylceramidase (EC 3.2.1.45) and galactosylceramide by beta-galactosylceramidase (EC 3.2.1.46). Saposin-C apparently acts by combining with the enzyme and acidic lipid to form an activated complex, rather than by solubilizing the substrate. Saposin-B stimulates the hydrolysis of galacto-cerebroside sulfate by arylsulfatase A (EC 3.1.6.8), GM1 gangliosides by beta-galactosidase (EC 3.2.1.23) and globotriaosylceramide by alpha-galactosidase A (EC 3.2.1.22). Saposin-B forms a solubilizing complex with the substrates of the sphingolipid hydrolases. Its function is as follows. Saposin-D is a specific sphingomyelin phosphodiesterase activator (EC 3.1.4.12). Functionally, saposins are specific low-molecular mass non-enzymatic proteins, they participate in the lysosomal degradation of sphingolipids, which takes place by the sequential action of specific hydrolases. The chain is Prosaposin (Psap) from Mus musculus (Mouse).